Reading from the N-terminus, the 627-residue chain is Myelin-associated glycoprotein (627 aa).

The signal sequence occupies residues 1-19 (MIFLATLPLFWIMISASRG). Positions 20-325 (GHWGAWMPST…RTVELSVMYA (306 aa)) are interaction with RTN4R and RTN4RL2. Residues 20–516 (GHWGAWMPST…HRLMWAKIGP (497 aa)) are Extracellular-facing. A glycan (C-linked (Man) tryptophan) is linked at tryptophan 22. The 99-residue stretch at 22-120 (WGAWMPSTIS…LGGKYYFRGD (99 aa)) folds into the Ig-like V-type domain. Intrachain disulfides connect cysteine 37–cysteine 165, cysteine 42–cysteine 100, and cysteine 159–cysteine 217. Residue 65-67 (YPK) coordinates a ganglioside GT1b (d18:1(4E)). Asparagine 99 carries N-linked (GlcNAc...) asparagine glycosylation. Residues arginine 118 and 124-128 (YNQYT) contribute to the a ganglioside GT1b (d18:1(4E)) site. Ig-like C2-type domains follow at residues 139–237 (NTPN…LDVK), 241–325 (VIVE…VMYA), 327–412 (WKPT…VEFA), and 413–508 (PIIL…GAHR). Residues asparagine 223 and asparagine 246 are each glycosylated (N-linked (GlcNAc...) asparagine). A disulfide bond links cysteine 261 and cysteine 305. 2 N-linked (GlcNAc...) asparagine glycosylation sites follow: asparagine 315 and asparagine 332. A disulfide bond links cysteine 347 and cysteine 392. A glycan (N-linked (GlcNAc...) asparagine) is linked at asparagine 406. 2 disulfides stabilise this stretch: cysteine 421-cysteine 430 and cysteine 432-cysteine 488. Residues asparagine 450 and asparagine 454 are each glycosylated (N-linked (GlcNAc...) asparagine). The helical transmembrane segment at 517-536 (VGAVVAFAILIAIVCYITQT) threads the bilayer. The S-palmitoyl cysteine moiety is linked to residue cysteine 531. At 537-627 (RRKKNVTESS…LAEYAEIRVK (91 aa)) the chain is on the cytoplasmic side. Phosphoserine occurs at positions 545, 547, 549, and 591. The interval 578-627 (LGSERRLLGLRGESPELDLSYSHSDLGKRPTKDSYTLTEELAEYAEIRVK) is required for normal axon myelination in the central nervous system.

This sequence belongs to the immunoglobulin superfamily. SIGLEC (sialic acid binding Ig-like lectin) family. Monomer and homodimer. Interacts (via the first three N-terminal Ig-like domains) with RTN4R and RTN4RL2. Interacts with isoform 2 of BSG. In terms of processing, N-glycosylated. Phosphorylated on tyrosine residues. Post-translationally, ubiquitinated, leading to proteasomal degradation. As to expression, detected in the myelin tract in brain, especially in the corpus callosum and in peripheral nerve. Expressed by myelinating glial cells in the central and peripheral nervous system. Detected in oligodendrocyte processes before formation of compact myelin. Restricted to the periaxonal space after myelination. Isoform S-MAG is the predominant isoform in CNS and PNS of the adult (at protein level).

It localises to the cell membrane. Its subcellular location is the membrane raft. Its function is as follows. Adhesion molecule that mediates interactions between myelinating cells and neurons by binding to neuronal sialic acid-containing gangliosides and to the glycoproteins RTN4R and RTN4RL2. Not required for initial myelination, but seems to play a role in the maintenance of normal axon myelination. Protects motoneurons against apoptosis, also after injury; protection against apoptosis is probably mediated via interaction with neuronal RTN4R and RTN4RL2. Required to prevent degeneration of myelinated axons in adults; this probably depends on binding to gangliosides on the axon cell membrane. Negative regulator of neurite outgrowth that inhibits axon longitudinal growth. Negative regulator of neurite outgrowth; in dorsal root ganglion neurons the inhibition is mediated primarily via binding to neuronal RTN4R or RTN4RL2 and to a lesser degree via binding to neuronal gangliosides. In cerebellar granule cells the inhibition is mediated via binding to neuronal gangliosides. In sensory neurons, inhibition of neurite extension depends only partially on RTN4R, RTN4RL2 and gangliosides. Inhibits axon outgrowth by binding to RTN4R. Preferentially binds to alpha-2,3-linked sialic acid. Binds ganglioside Gt1b. This chain is Myelin-associated glycoprotein (Mag), found in Mus musculus (Mouse).